Reading from the N-terminus, the 392-residue chain is Ribonuclease D (392 aa).

The 3'-5' exonuclease domain occupies 12–178 (LIETTEALAA…PVYEGLRARL (167 aa)). Residues 217–298 (NRRQLALVKA…ASTKAIPDAE (82 aa)) enclose the HRDC domain.

It belongs to the RNase D family. A divalent metal cation is required as a cofactor.

It is found in the cytoplasm. It catalyses the reaction Exonucleolytic cleavage that removes extra residues from the 3'-terminus of tRNA to produce 5'-mononucleotides.. Exonuclease involved in the 3' processing of various precursor tRNAs. Initiates hydrolysis at the 3'-terminus of an RNA molecule and releases 5'-mononucleotides. The chain is Ribonuclease D from Acidiphilium cryptum (strain JF-5).